A 115-amino-acid polypeptide reads, in one-letter code: Tyrosine-protein phosphatase 24 (115 aa).

Residues 1–115 (WMMIVEQKCR…ETGSDAPMVV (115 aa)) enclose the Tyrosine-protein phosphatase domain. Asp-83 lines the substrate pocket.

This sequence belongs to the protein-tyrosine phosphatase family.

The catalysed reaction is O-phospho-L-tyrosyl-[protein] + H2O = L-tyrosyl-[protein] + phosphate. This is Tyrosine-protein phosphatase 24 (STY-24) from Styela plicata (Wrinkled sea squirt).